Consider the following 115-residue polypeptide: Secreted RxLR effector protein 2 (115 aa).

A signal peptide spans 1–22 (MICRSPLIVVMLFVIAAHTVLA). A RxLR-dEER motif is present at residues 57-82 (RFLRQETTFEKKLGVNDVHAVHAEER).

The protein belongs to the RxLR effector family.

The protein localises to the secreted. It localises to the host cytoplasm. It is found in the host nucleus. Its function is as follows. Effector that acts as a broad suppressor of cell death to interrupt plant immunity. Inhibits cell death induced by cell death-inducing proteins, including the PAMP elicitor INF1 from P.infestans. The sequence is that of Secreted RxLR effector protein 2 from Plasmopara viticola (Downy mildew of grapevine).